A 321-amino-acid chain; its full sequence is ATP-dependent 6-phosphofructokinase (321 aa).

Position 11 (Gly-11) interacts with ATP. 21–25 is a binding site for ADP; sequence RAVVR. ATP-binding positions include 72–73 and 102–105; these read RC and GDGS. Residue Asp-103 participates in Mg(2+) binding. Substrate is bound at residue 126 to 128; that stretch reads TID. Asp-128 serves as the catalytic Proton acceptor. Arg-155 is an ADP binding site. Residues Arg-163 and 170–172 contribute to the substrate site; that span reads MGR. ADP contacts are provided by residues 186–188, Arg-212, and 214–216; these read GAE and KLH. Residues Glu-223, Arg-245, and 251–254 contribute to the substrate site; that span reads HIQR.

Belongs to the phosphofructokinase type A (PFKA) family. ATP-dependent PFK group I subfamily. Prokaryotic clade 'B1' sub-subfamily. In terms of assembly, homotetramer. Mg(2+) serves as cofactor.

It localises to the cytoplasm. The catalysed reaction is beta-D-fructose 6-phosphate + ATP = beta-D-fructose 1,6-bisphosphate + ADP + H(+). Its pathway is carbohydrate degradation; glycolysis; D-glyceraldehyde 3-phosphate and glycerone phosphate from D-glucose: step 3/4. With respect to regulation, allosterically activated by ADP and other diphosphonucleosides, and allosterically inhibited by phosphoenolpyruvate. Catalyzes the phosphorylation of D-fructose 6-phosphate to fructose 1,6-bisphosphate by ATP, the first committing step of glycolysis. The polypeptide is ATP-dependent 6-phosphofructokinase (Caldanaerobacter subterraneus subsp. tengcongensis (strain DSM 15242 / JCM 11007 / NBRC 100824 / MB4) (Thermoanaerobacter tengcongensis)).